The following is a 274-amino-acid chain: Proteasome subunit beta (274 aa).

Residues Met-1–Gly-52 constitute a propeptide, removed in mature form; by autocatalysis. Catalysis depends on Thr-53, which acts as the Nucleophile.

The protein belongs to the peptidase T1B family. In terms of assembly, the 20S proteasome core is composed of 14 alpha and 14 beta subunits that assemble into four stacked heptameric rings, resulting in a barrel-shaped structure. The two inner rings, each composed of seven catalytic beta subunits, are sandwiched by two outer rings, each composed of seven alpha subunits. The catalytic chamber with the active sites is on the inside of the barrel. Has a gated structure, the ends of the cylinder being occluded by the N-termini of the alpha-subunits. Is capped by the proteasome-associated ATPase, ARC.

The protein localises to the cytoplasm. It carries out the reaction Cleavage of peptide bonds with very broad specificity.. Its pathway is protein degradation; proteasomal Pup-dependent pathway. The formation of the proteasomal ATPase ARC-20S proteasome complex, likely via the docking of the C-termini of ARC into the intersubunit pockets in the alpha-rings, may trigger opening of the gate for substrate entry. Interconversion between the open-gate and close-gate conformations leads to a dynamic regulation of the 20S proteasome proteolysis activity. Its function is as follows. Component of the proteasome core, a large protease complex with broad specificity involved in protein degradation. This Frankia alni (strain DSM 45986 / CECT 9034 / ACN14a) protein is Proteasome subunit beta.